Reading from the N-terminus, the 108-residue chain is Transcriptional activator HlyU (108 aa).

Residues 13 to 107 (EMEKNSAKAV…LLHRLYCQAN (95 aa)) enclose the HTH arsR-type domain. The H-T-H motif DNA-binding region spans 47-66 (VGELSSRLELSQSALSQHLA).

Functionally, up-regulates the expression of the hemolysin gene, hlyA, and may promote expression of other virulence determinants in vivo. It may have both positive and negative regulator activities. The protein is Transcriptional activator HlyU (hlyU) of Vibrio cholerae serotype O1 (strain ATCC 39315 / El Tor Inaba N16961).